The sequence spans 336 residues: Protease HtpX homolog (336 aa).

Transmembrane regions (helical) follow at residues 7 to 24 (AMLL…GFLI) and 29 to 48 (GMMI…YWNA). His-130 is a binding site for Zn(2+). Residue Glu-131 is part of the active site. His-134 contacts Zn(2+). The next 2 membrane-spanning stretches (helical) occupy residues 145 to 165 (IVAT…FLGG) and 171 to 191 (PFGF…AMIV). Glu-200 provides a ligand contact to Zn(2+). A compositionally biased stretch (low complexity) spans 278-287 (QQMAGGTQAA). The disordered stretch occupies residues 278-336 (QQMAGGTQAAPRPTPRQAGEQQPSGPWGQAPQAEQPAEPERPKANPWGRNPTGPKGRWS).

It belongs to the peptidase M48B family. It depends on Zn(2+) as a cofactor.

It localises to the cell inner membrane. This Mesorhizobium japonicum (strain LMG 29417 / CECT 9101 / MAFF 303099) (Mesorhizobium loti (strain MAFF 303099)) protein is Protease HtpX homolog.